A 145-amino-acid chain; its full sequence is Transcriptional regulator SlyA (145 aa).

The HTH marR-type domain occupies 2–135 (ELPLGSDLAR…LALLVARLEK (134 aa)). The H-T-H motif DNA-binding region spans 49–72 (QIQLAKAIGIEQPSLVRTLDQLEE).

This sequence belongs to the SlyA family. In terms of assembly, homodimer.

Its function is as follows. Transcription regulator that can specifically activate or repress expression of target genes. The protein is Transcriptional regulator SlyA of Pectobacterium atrosepticum (strain SCRI 1043 / ATCC BAA-672) (Erwinia carotovora subsp. atroseptica).